The following is a 940-amino-acid chain: DNA gyrase subunit A (940 aa).

The interval 1–22 (MSDHTNPPSAPPDDDPNGGSLL) is disordered. The Topo IIA-type catalytic domain maps to 48–538 (LPDARDGLKP…SLADQDDESL (491 aa)). The active-site O-(5'-phospho-DNA)-tyrosine intermediate is Tyr-136. The short motif at 565 to 571 (QHRGGRG) is the GyrA-box element. Residues 914-924 (ESVDDNGDDAD) show a composition bias toward acidic residues. Residues 914–940 (ESVDDNGDDADSVAPAAPDGQVTDSDD) are disordered.

The protein belongs to the type II topoisomerase GyrA/ParC subunit family. As to quaternary structure, heterotetramer, composed of two GyrA and two GyrB chains. In the heterotetramer, GyrA contains the active site tyrosine that forms a transient covalent intermediate with DNA, while GyrB binds cofactors and catalyzes ATP hydrolysis.

It is found in the cytoplasm. The catalysed reaction is ATP-dependent breakage, passage and rejoining of double-stranded DNA.. Functionally, a type II topoisomerase that negatively supercoils closed circular double-stranded (ds) DNA in an ATP-dependent manner to modulate DNA topology and maintain chromosomes in an underwound state. Negative supercoiling favors strand separation, and DNA replication, transcription, recombination and repair, all of which involve strand separation. Also able to catalyze the interconversion of other topological isomers of dsDNA rings, including catenanes and knotted rings. Type II topoisomerases break and join 2 DNA strands simultaneously in an ATP-dependent manner. The polypeptide is DNA gyrase subunit A (Granulibacter bethesdensis (strain ATCC BAA-1260 / CGDNIH1)).